The sequence spans 211 residues: Urease accessory protein UreE (211 aa).

Residues 134–211 (FDPEGGAYAP…DHHGHGHEHK (78 aa)) are disordered. Positions 147-202 (PSHDHAGHDHAHDSHAHHDHDHGKHAQHDHGKHDHAHHDHAAHDDHHVHDEHCGHD) are enriched in basic and acidic residues.

This sequence belongs to the UreE family.

The protein localises to the cytoplasm. Functionally, involved in urease metallocenter assembly. Binds nickel. Probably functions as a nickel donor during metallocenter assembly. This Rhodopseudomonas palustris (strain BisB18) protein is Urease accessory protein UreE.